The primary structure comprises 472 residues: Selenium-binding protein 2 (472 aa).

S467 is subject to Phosphoserine.

Belongs to the selenium-binding protein family. The N-terminus is blocked. Mainly expressed in liver.

It is found in the nucleus. The protein localises to the cytoplasm. Its subcellular location is the cytosol. The protein resides in the membrane. Functionally, selenium- and acetaminophen-binding protein which may be involved in the sensing of reactive xenobiotics in the cytoplasm. May be involved in intra-Golgi protein transport. The protein is Selenium-binding protein 2 (Selenbp2) of Mus musculus (Mouse).